The primary structure comprises 432 residues: Luc7-like protein 3 (432 aa).

An N-acetylmethionine modification is found at M1. S3, S110, and S115 each carry phosphoserine. The stretch at 124 to 181 forms a coiled coil; it reads KNEEKIQVLTDKIDVLLQQIEELGSEGKVEEAQGMMKLVEQLKEERELLRSTTSTIES. K231 is subject to N6-acetyllysine. Residues 234–287 are compositionally biased toward basic and acidic residues; the sequence is LRKRTEEPDRDERLKKEKQEREEREKEREREREERERKRRREEEEREKERARDR. Residues 234-432 are disordered; it reads LRKRTEEPDR…IKSEGDTQSN (199 aa). The span at 288-301 shows a compositional bias: basic residues; it reads ERRKRSRSRSRHSS. Over residues 302–311 the composition is skewed to basic and acidic residues; the sequence is RTSDRRCSRS. Positions 312-367 are enriched in basic residues; it reads RDHKRSRSRERRRSRSRDRRRSRSHDRSERKHRSRSRDRRRSKSRDRKSYKHRSKS. The segment covering 368–414 has biased composition (basic and acidic residues); the sequence is RDREQDRKSKEKEKRGSDDKKSSVKSSSREKQSEDTNTESKESDTKN. Residue S420 is modified to Phosphoserine. Residues 421 to 432 are compositionally biased toward basic and acidic residues; that stretch reads EDIKSEGDTQSN. Residue K424 forms a Glycyl lysine isopeptide (Lys-Gly) (interchain with G-Cter in SUMO1); alternate linkage. A Glycyl lysine isopeptide (Lys-Gly) (interchain with G-Cter in SUMO2); alternate cross-link involves residue K424. A phosphoserine mark is found at S425 and S431.

It belongs to the Luc7 family. In terms of assembly, may interact with SFRS1 and form homodimers. Interacts with JMJD6. Interacts with RBM25. Interacts with RSRC1 (via Arg/Ser-rich domain). Interacts with RRP1B.

Its subcellular location is the nucleus speckle. In terms of biological role, binds cAMP regulatory element DNA sequence. May play a role in RNA splicing. The chain is Luc7-like protein 3 (LUC7L3) from Bos taurus (Bovine).